We begin with the raw amino-acid sequence, 257 residues long: AA9 family lytic polysaccharide monooxygenase U (257 aa).

The N-terminal stretch at 1–19 is a signal peptide; the sequence is MKLYLAAFLGAVATPGAFA. Cu(2+) is bound at residue His20. N-linked (GlcNAc...) asparagine glycosylation is found at Asn29 and Asn71. Cys74 and Cys194 are disulfide-bonded. His113 is a Cu(2+) binding site. A glycan (N-linked (GlcNAc...) asparagine) is linked at Asn161. Residue Gln189 participates in O2 binding. Tyr191 contributes to the Cu(2+) binding site.

Belongs to the polysaccharide monooxygenase AA9 family. Cu(2+) serves as cofactor.

Its subcellular location is the secreted. The enzyme catalyses [(1-&gt;4)-beta-D-glucosyl]n+m + reduced acceptor + O2 = 4-dehydro-beta-D-glucosyl-[(1-&gt;4)-beta-D-glucosyl]n-1 + [(1-&gt;4)-beta-D-glucosyl]m + acceptor + H2O.. In terms of biological role, lytic polysaccharide monooxygenase (LPMO) that depolymerizes crystalline and amorphous polysaccharides via the oxidation of scissile alpha- or beta-(1-4)-glycosidic bonds, yielding C1 and C4 oxidation products. Catalysis by LPMOs requires the reduction of the active-site copper from Cu(II) to Cu(I) by a reducing agent and H(2)O(2) or O(2) as a cosubstrate. Shows no activity on wheat arabinoxylan, konjac glucomannan, acetylated spruce galactoglucomannan, or cellopentaose. This chain is AA9 family lytic polysaccharide monooxygenase U, found in Thermothielavioides terrestris (strain ATCC 38088 / NRRL 8126) (Thielavia terrestris).